The chain runs to 179 residues: Bifunctional protein PyrR (179 aa).

Substrate is bound by residues 39–40, 101–109, Arg-134, and Val-158; these read RR and DDVLFTGRT. The short motif at 97–109 is the PRPP-binding element; it reads VILIDDVLFTGRT.

It belongs to the purine/pyrimidine phosphoribosyltransferase family. PyrR subfamily.

The catalysed reaction is UMP + diphosphate = 5-phospho-alpha-D-ribose 1-diphosphate + uracil. Its function is as follows. Regulates the transcription of the pyrimidine nucleotide (pyr) operon in response to exogenous pyrimidines. In terms of biological role, also displays a weak uracil phosphoribosyltransferase activity which is not physiologically significant. This is Bifunctional protein PyrR from Haemophilus ducreyi (strain 35000HP / ATCC 700724).